The following is a 500-amino-acid chain: NAD(P)H-quinone oxidoreductase chain 4, chloroplastic (500 aa).

A run of 14 helical transmembrane segments spans residues 4–24 (FPWLTIIVVFPISAGSLMLFL), 35–55 (YTICICILELLITTYAFCYNF), 87–107 (IGTILLTGFITTLATLAAFPV), 113–130 (LFHFLMLAMYSGQIGSFS), 134–154 (LLLFFIMWELELIPVYLLLSM), 167–187 (FILYTAGSSIFLLIGVLGISL), 211–231 (IILYIGFLIAFAVKSPLIPLH), 242–262 (HYSTCMLLAGILLKMGAYGLV), 272–292 (AHSLFSPWLMVVGTIQIIYAA), 305–325 (IAYSSVSHMGFIIIGIASITD), 330–350 (GAILQIISHGFIGAALFFLAG), 386–406 (LALPGMSGFVAEFIVFFGIIT), 416–436 (IFIIVVMAIGMILTPIYLLSM), and 462–482 (LFLSISSLLPIIGMGIYPDFV).

This sequence belongs to the complex I subunit 4 family.

The protein localises to the plastid. The protein resides in the chloroplast thylakoid membrane. The enzyme catalyses a plastoquinone + NADH + (n+1) H(+)(in) = a plastoquinol + NAD(+) + n H(+)(out). The catalysed reaction is a plastoquinone + NADPH + (n+1) H(+)(in) = a plastoquinol + NADP(+) + n H(+)(out). The sequence is that of NAD(P)H-quinone oxidoreductase chain 4, chloroplastic from Aethionema cordifolium (Lebanon stonecress).